The chain runs to 484 residues: tRNA sulfurtransferase (484 aa).

Residues 63-167 (REMIERLCCT…DQRLFVVHRQ (105 aa)) form the THUMP domain. Residues 185–186 (LM), Lys267, Gly289, and Gln298 each bind ATP. The cysteines at positions 346 and 457 are disulfide-linked. The region spanning 405-483 (ALAGQIVLDI…GHANVRVYRP (79 aa)) is the Rhodanese domain. Cys457 acts as the Cysteine persulfide intermediate in catalysis.

Belongs to the ThiI family.

Its subcellular location is the cytoplasm. It carries out the reaction [ThiI sulfur-carrier protein]-S-sulfanyl-L-cysteine + a uridine in tRNA + 2 reduced [2Fe-2S]-[ferredoxin] + ATP + H(+) = [ThiI sulfur-carrier protein]-L-cysteine + a 4-thiouridine in tRNA + 2 oxidized [2Fe-2S]-[ferredoxin] + AMP + diphosphate. It catalyses the reaction [ThiS sulfur-carrier protein]-C-terminal Gly-Gly-AMP + S-sulfanyl-L-cysteinyl-[cysteine desulfurase] + AH2 = [ThiS sulfur-carrier protein]-C-terminal-Gly-aminoethanethioate + L-cysteinyl-[cysteine desulfurase] + A + AMP + 2 H(+). Its pathway is cofactor biosynthesis; thiamine diphosphate biosynthesis. Catalyzes the ATP-dependent transfer of a sulfur to tRNA to produce 4-thiouridine in position 8 of tRNAs, which functions as a near-UV photosensor. Also catalyzes the transfer of sulfur to the sulfur carrier protein ThiS, forming ThiS-thiocarboxylate. This is a step in the synthesis of thiazole, in the thiamine biosynthesis pathway. The sulfur is donated as persulfide by IscS. In Azotobacter vinelandii (strain DJ / ATCC BAA-1303), this protein is tRNA sulfurtransferase.